The following is a 120-amino-acid chain: Immunoglobulin kappa variable 2D-29 (120 aa).

Residues 1–20 form the signal peptide; sequence MRLPAQLLGLLMLWIPGSSA. The interval 21–43 is framework-1; sequence DIVMTQTPLSLSVTPGQPASISC. Residues 21 to 120 enclose the Ig-like domain; that stretch reads DIVMTQTPLS…YYCMQSIQLP (100 aa). Cys-43 and Cys-113 form a disulfide bridge. Residues 44–59 are complementarity-determining-1; that stretch reads KSSQSLLHSDGKTYLY. Residues 60–74 are framework-2; it reads WYLQKPGQPPQLLIY. A complementarity-determining-2 region spans residues 75 to 81; the sequence is EVSNRFS. The interval 82–113 is framework-3; the sequence is GVPDRFSGSGSGTDFTLKISRVEAEDVGVYYC. The segment at 114–120 is complementarity-determining-3; the sequence is MQSIQLP.

As to quaternary structure, immunoglobulins are composed of two identical heavy chains and two identical light chains; disulfide-linked.

It is found in the secreted. The protein resides in the cell membrane. Its function is as follows. V region of the variable domain of immunoglobulin light chains that participates in the antigen recognition. Immunoglobulins, also known as antibodies, are membrane-bound or secreted glycoproteins produced by B lymphocytes. In the recognition phase of humoral immunity, the membrane-bound immunoglobulins serve as receptors which, upon binding of a specific antigen, trigger the clonal expansion and differentiation of B lymphocytes into immunoglobulins-secreting plasma cells. Secreted immunoglobulins mediate the effector phase of humoral immunity, which results in the elimination of bound antigens. The antigen binding site is formed by the variable domain of one heavy chain, together with that of its associated light chain. Thus, each immunoglobulin has two antigen binding sites with remarkable affinity for a particular antigen. The variable domains are assembled by a process called V-(D)-J rearrangement and can then be subjected to somatic hypermutations which, after exposure to antigen and selection, allow affinity maturation for a particular antigen. In Homo sapiens (Human), this protein is Immunoglobulin kappa variable 2D-29.